A 374-amino-acid polypeptide reads, in one-letter code: Chaperone protein DnaJ (374 aa).

The J domain maps to serine 4 to glycine 69. The CR-type zinc-finger motif lies at glycine 136–lysine 213. The Zn(2+) site is built by cysteine 149, cysteine 152, cysteine 165, cysteine 168, cysteine 187, cysteine 190, cysteine 201, and cysteine 204. CXXCXGXG motif repeat units lie at residues cysteine 149 to glycine 156, cysteine 165 to glycine 172, cysteine 187 to glycine 194, and cysteine 201 to glycine 208.

Belongs to the DnaJ family. As to quaternary structure, homodimer. The cofactor is Zn(2+).

The protein localises to the cytoplasm. Functionally, participates actively in the response to hyperosmotic and heat shock by preventing the aggregation of stress-denatured proteins and by disaggregating proteins, also in an autonomous, DnaK-independent fashion. Unfolded proteins bind initially to DnaJ; upon interaction with the DnaJ-bound protein, DnaK hydrolyzes its bound ATP, resulting in the formation of a stable complex. GrpE releases ADP from DnaK; ATP binding to DnaK triggers the release of the substrate protein, thus completing the reaction cycle. Several rounds of ATP-dependent interactions between DnaJ, DnaK and GrpE are required for fully efficient folding. Also involved, together with DnaK and GrpE, in the DNA replication of plasmids through activation of initiation proteins. This chain is Chaperone protein DnaJ, found in Campylobacter jejuni subsp. jejuni serotype O:6 (strain 81116 / NCTC 11828).